The primary structure comprises 348 residues: Nuclear receptor subfamily 1 group I member 3 (348 aa).

The nuclear receptor DNA-binding region spans 8–83 (LRNCVVCGDQ…AGMRKDMILS (76 aa)). The segment at 11 to 31 (CVVCGDQATGYHFNALTCEGC) adopts an NR C4-type zinc-finger fold. T38 is subject to Phosphothreonine; by PKC. The segment at 47–71 (CPFAGSCEVSKTQRRHCPACRLQKC) adopts an NR C4-type zinc-finger fold. Positions 109-348 (EQEELIRTLL…MMPLLQEICS (240 aa)) constitute an NR LBD domain.

The protein belongs to the nuclear hormone receptor family. NR1 subfamily. In terms of assembly, heterodimer of NR1I3 and RXR. Interacts with PSMC4. Interacts with ECT2. Directly interacts with DNAJC7; this complex may also include HSP90. Interacts with CRY1. Interacts with CRY2 in a ligand-dependent manner. Phosphorylated at Thr-38 by PKC, dephosphorylation of Thr-38 is required for nuclear translocation and activation.

It localises to the nucleus. It is found in the cytoplasm. Its subcellular location is the cytoskeleton. Its function is as follows. Binds and transactivates the retinoic acid response elements that control expression of the retinoic acid receptor beta 2 and alcohol dehydrogenase 3 genes. Transactivates both the phenobarbital responsive element module of the human CYP2B6 gene and the CYP3A4 xenobiotic response element. The chain is Nuclear receptor subfamily 1 group I member 3 (NR1I3) from Pan troglodytes (Chimpanzee).